A 223-amino-acid polypeptide reads, in one-letter code: MNIAKMIDHTLLKPNATKSEIEKLCNEAKEYGFASVCINPCFVDLAYSMLKDTDVKVCTVIGFPLGANTIESKVFEAVDAVKRGATEVDMVLNVSMLKSGDYDYVKKEIEEVVKAVKSYGDIVVKVILETCYLTDEEKVKACQLTREAGADFVKTSTGFGPGGATVEDVKLMRQTVGENFGVKASGCVRTAEDAKAMIEAGANRIGASAGVKIAEEWNKLKMS.

The active-site Proton donor/acceptor is D89. K154 acts as the Schiff-base intermediate with acetaldehyde in catalysis. The active-site Proton donor/acceptor is the K183.

Belongs to the DeoC/FbaB aldolase family. DeoC type 1 subfamily.

The protein localises to the cytoplasm. It catalyses the reaction 2-deoxy-D-ribose 5-phosphate = D-glyceraldehyde 3-phosphate + acetaldehyde. The protein operates within carbohydrate degradation; 2-deoxy-D-ribose 1-phosphate degradation; D-glyceraldehyde 3-phosphate and acetaldehyde from 2-deoxy-alpha-D-ribose 1-phosphate: step 2/2. Its function is as follows. Catalyzes a reversible aldol reaction between acetaldehyde and D-glyceraldehyde 3-phosphate to generate 2-deoxy-D-ribose 5-phosphate. In Thermoanaerobacter pseudethanolicus (strain ATCC 33223 / 39E) (Clostridium thermohydrosulfuricum), this protein is Deoxyribose-phosphate aldolase.